We begin with the raw amino-acid sequence, 59 residues long: Cecropin-A2 (59 aa).

Residues 1-23 (MNFNKLFAIVLLAALVLLGQTEA) form the signal peptide.

The protein belongs to the cecropin family.

The protein resides in the secreted. Functionally, cecropins have lytic and antibacterial activity against several Gram-positive and Gram-negative bacteria. This chain is Cecropin-A2 (CECA2), found in Aedes albopictus (Asian tiger mosquito).